A 244-amino-acid chain; its full sequence is 14-3-3 protein beta/alpha-1 (244 aa).

Methionine 1 is subject to N-acetylmethionine.

It belongs to the 14-3-3 family. In terms of assembly, homodimer, and heterodimer with other family members. Expressed in brain, gill, heart, intestine, kidney, liver, ovary, skin, spleen and testis.

It localises to the cytoplasm. In terms of biological role, adapter protein implicated in the regulation of a large spectrum of both general and specialized signaling pathways. Binds to a large number of partners, usually by recognition of a phosphoserine or phosphothreonine motif. Binding generally results in the modulation of the activity of the binding partner. This is 14-3-3 protein beta/alpha-1 from Oncorhynchus mykiss (Rainbow trout).